Reading from the N-terminus, the 2599-residue chain is Non-reducing polyketide synthase azaA (2599 aa).

An N-terminal acylcarrier protein transacylase domain (SAT) region spans residues 95-231 (PNILLSPMVV…AARSISSLQQ (137 aa)). C132 acts as the Nucleophile; for transacylase activity in catalysis. H250 serves as the catalytic Proton donor/acceptor; for transacylase activity. Residues 372 to 790 (PNEIAVIGMS…GSNASMVVAQ (419 aa)) enclose the Ketosynthase family 3 (KS3) domain. Active-site for beta-ketoacyl synthase activity residues include C539, H674, and H713. The tract at residues 902-1193 (FGGQISNYVG…ITSMASRALG (292 aa)) is malonyl-CoA:ACP transacylase (MAT) domain. The N-terminal hotdog fold stretch occupies residues 1282–1413 (PKTLWSLIEA…GKLAFLSGQD (132 aa)). The region spanning 1282 to 1591 (PKTLWSLIEA…YHKVAKASMS (310 aa)) is the PKS/mFAS DH domain. Residues 1310–1589 (LVSGHVIANT…INYHKVAKAS (280 aa)) are product template (PT) domain. H1314 acts as the Proton acceptor; for dehydratase activity in catalysis. Residues 1443-1591 (ADDIIQGRNI…YHKVAKASMS (149 aa)) form a C-terminal hotdog fold region. The Proton donor; for dehydratase activity role is filled by D1499. A disordered region spans residues 1601–1652 (EAAPSSSTRAHPTSSSSPRLPGPFVPEDKSQNETQTAGTNAVAKKKSEKSAQ). Low complexity predominate over residues 1602-1619 (AAPSSSTRAHPTSSSSPR). One can recognise a Carrier domain in the interval 1653–1727 (QNVLDKTRAL…GLVEYVQSAV (75 aa)). S1687 is subject to O-(pantetheine 4'-phosphoryl)serine. Positions 1749–1779 (NLAASPSSSSSSTNLTEDSSLDPTETTTNIS) are disordered. Over residues 1750 to 1766 (LAASPSSSSSSTNLTED) the composition is skewed to low complexity. A compositionally biased stretch (polar residues) spans 1769–1779 (LDPTETTTNIS). The methyltransferase domain stretch occupies residues 1952 to 2140 (DSLLNKLSYR…VGYGQVDWTD (189 aa)). The segment at 2222–2467 (ITGATGSLGV…LCWTPVNDVA (246 aa)) is NADPH-binding (R) domain.

Requires pantetheine 4'-phosphate as cofactor.

It participates in secondary metabolite biosynthesis. Non-reducing polyketide synthase; part of the gene cluster that mediates the biosynthesis of azaphilones, a class of fungal metabolites characterized by a highly oxygenated pyrano-quinone bicyclic core and exhibiting a broad range of bioactivities. In the first step, the non-reducing polyketide synthase azaA forms the hexaketide precursor from successive condensations of five malonyl-CoA units, presumably with a simple acetyl-CoA starter unit. The reactive polyketide chain then undergoes a PT-mediated C2-C7 cyclization to afford the aromatic ring and is eventually released as an aldehyde through the R-domain. The putative ketoreductase azaE is proposed to catalyze the reduction of the terminal ketone resulting in the early culture product FK17-P2a. The monooxygenase azaH was demonstrated to be the only enzyme required to convert FK17-P2a to azanigerone E. AzaH first hydroxylates the benzaldehyde intermediate FK17-P2a at C4, which triggers the formation of the pyran-ring to afford azanigerone E. In parallel, the 2,4-dimethylhexanoyl chain is synthesized by the HR-PKS azaB and is proposed to be transferred to the C4-hydroxyl of azanigerone E by the acyltransferase azaD directly from the ACP domain of azaB. Alternatively, the 2,4-dimethyl-hexanoyl chain may be offloaded from the HR-PKS as a carboxylic acid and converted to an acyl-CoA by azaF. The resulting acyl-CoA molecule could then be taken up as a substrate by AzaD to form azanigerone B. To yield the carboxylic acid substituent in azanigerone A, the hydroxypropyl side chain of azanigerone B would need to undergo a C-C oxidative cleavage catalyzed by cytochrome P450 AzaI. AzaI is proposed to act on a vicinal diol that leads to a C-C bond scission either through an alkoxyradical intermediate or a peroxy complex. In the biosynthesis of azanigerone A, azanigerone B first undergoes hydroxylation at C10, possibly catalyzed by one of the two FAD-dependent monooxygenases encoded in the cluster, azaG or azaL, resulting in the vicinal diol azanigerone C. Oxidative cleavage of azanigerone C by azaI would yield the corresponding aldehyde derivative of azanigerone A. Finally, the dehydrogenase azaJ is proposed to convert the aldehyde functional group into the carboxylic acid, completing the conversion from azanigerone B to azanigerone A. Alternatively, the oxidation of aldehyde to carboxylic acid may be catalyzed by the same P450 enzyme azaI via consecutive oxidation or by endogenous alcohol dehydrogenase. The sequence is that of Non-reducing polyketide synthase azaA from Aspergillus niger (strain ATCC 1015 / CBS 113.46 / FGSC A1144 / LSHB Ac4 / NCTC 3858a / NRRL 328 / USDA 3528.7).